A 331-amino-acid chain; its full sequence is Zinc finger protein 660 (331 aa).

The span at Met-1–Thr-12 shows a compositional bias: basic residues. The segment at Met-1–Cys-35 is disordered. Residue Ser-23 is modified to Phosphoserine. 10 C2H2-type zinc fingers span residues Tyr-50–His-72, Tyr-78–His-100, Tyr-106–His-128, Tyr-134–His-156, Tyr-162–His-184, Tyr-190–His-212, Tyr-218–His-240, Tyr-246–His-268, Tyr-274–His-296, and Tyr-302–His-324.

It belongs to the krueppel C2H2-type zinc-finger protein family.

The protein localises to the nucleus. In terms of biological role, may be involved in transcriptional regulation. The protein is Zinc finger protein 660 (ZNF660) of Homo sapiens (Human).